A 665-amino-acid polypeptide reads, in one-letter code: Dual specificity protein phosphatase 16 (665 aa).

The 116-residue stretch at G22–E137 folds into the Rhodanese domain. K55 bears the (Microbial infection) N6-acetyllysine; by EIS mark. Positions G158–N300 constitute a Tyrosine-protein phosphatase domain. Catalysis depends on C244, which acts as the Phosphocysteine intermediate. Positions E321–P368 are disordered. Low complexity predominate over residues P354–P368. A Phosphoserine; by MAPK1 modification is found at S446. 2 stretches are compositionally biased toward polar residues: residues Q449–T458 and V487–L499. Disordered regions lie at residues Q449–R505 and V597–S665. The residue at position 501 (S501) is a Phosphoserine. Residues K602–Q622 show a composition bias toward basic and acidic residues.

The protein belongs to the protein-tyrosine phosphatase family. Non-receptor class dual specificity subfamily. As to quaternary structure, interacts with ARRB2. Post-translationally, phosphorylated at Ser-446 by MAPK1/ERK2, which prevents its degradation, and thereby stabilizes it and blocks JNK MAPK activity. In terms of processing, (Microbial infection) Acetylated at Lys-55 by the M.tuberculosis Eis protein; this leads to the inhibition of JNK-dependent autophagy, phagosome maturation, and ROS (reactive oxygen species) generation for enhanced intracellular survival of M.tuberculosis.

The protein resides in the cytoplasm. Its subcellular location is the nucleus. It is found in the cytoplasmic vesicle. It carries out the reaction O-phospho-L-tyrosyl-[protein] + H2O = L-tyrosyl-[protein] + phosphate. The catalysed reaction is O-phospho-L-seryl-[protein] + H2O = L-seryl-[protein] + phosphate. The enzyme catalyses O-phospho-L-threonyl-[protein] + H2O = L-threonyl-[protein] + phosphate. Dual specificity protein phosphatase involved in the inactivation of MAP kinases. Dephosphorylates MAPK10 bound to ARRB2. In Homo sapiens (Human), this protein is Dual specificity protein phosphatase 16 (DUSP16).